The chain runs to 406 residues: Nicotinate phosphoribosyltransferase (406 aa).

His-225 carries the post-translational modification Phosphohistidine; by autocatalysis.

This sequence belongs to the NAPRTase family. Post-translationally, transiently phosphorylated on a His residue during the reaction cycle. Phosphorylation strongly increases the affinity for substrates and increases the rate of nicotinate D-ribonucleotide production. Dephosphorylation regenerates the low-affinity form of the enzyme, leading to product release.

The enzyme catalyses nicotinate + 5-phospho-alpha-D-ribose 1-diphosphate + ATP + H2O = nicotinate beta-D-ribonucleotide + ADP + phosphate + diphosphate. Its pathway is cofactor biosynthesis; NAD(+) biosynthesis; nicotinate D-ribonucleotide from nicotinate: step 1/1. Its function is as follows. Catalyzes the synthesis of beta-nicotinate D-ribonucleotide from nicotinate and 5-phospho-D-ribose 1-phosphate at the expense of ATP. This is Nicotinate phosphoribosyltransferase from Psychromonas ingrahamii (strain DSM 17664 / CCUG 51855 / 37).